The sequence spans 565 residues: Heme/hemopexin transporter protein HuxB (565 aa).

The N-terminal stretch at 1–26 (MKMRPRYSVIASAVSLGFVLSKSVMA) is a signal peptide. One can recognise a POTRA domain in the interval 73–150 (FPLTQVQILD…GTVKILLLKG (78 aa)).

The protein belongs to the TPS (TC 1.B.20) family.

The protein resides in the cell outer membrane. Its function is as follows. Likely functions in the release of soluble HxuA from the cell. In terms of biological role, probable member of a two partner secretion pathway (TPS) in which it mediates the secretion of HuxA. The protein is Heme/hemopexin transporter protein HuxB (hxuB) of Haemophilus influenzae.